The chain runs to 602 residues: Sensor histidine kinase AtsR (602 aa).

2 helical membrane passes run 11–31 (IIVA…FLLF) and 182–202 (AIVM…LLLF). The Histidine kinase domain maps to 242-461 (MVSHELRTPL…EFVVTLPVEL (220 aa)). At H245 the chain carries Phosphohistidine; by autocatalysis. Residues 484 to 601 (HALVVDDNEN…TLNGIVSRLR (118 aa)) form the Response regulatory domain. A 4-aspartylphosphate modification is found at D533.

The protein localises to the cell inner membrane. The catalysed reaction is ATP + protein L-histidine = ADP + protein N-phospho-L-histidine.. Member of a two-component regulatory system involved in control of gene expression; inhibits synthesis of (at least) the polyketide antibiotic thailandamide. Its two-component partner may be BTH_I0635. This Burkholderia thailandensis (strain ATCC 700388 / DSM 13276 / CCUG 48851 / CIP 106301 / E264) protein is Sensor histidine kinase AtsR.